The following is a 223-amino-acid chain: Glutathione S-transferase A1 (223 aa).

An N-acetylmethionine modification is found at Met-1. Position 2 is an N-acetylalanine; in Glutathione S-transferase A1, N-terminally processed (Ala-2). The 81-residue stretch at 3-83 (GKPVLHYFNA…YIATKYDLYG (81 aa)) folds into the GST N-terminal domain. Lys-4 carries the post-translational modification N6-succinyllysine. Glutathione-binding positions include Tyr-9, Lys-45, 54–55 (QV), and 67–68 (QT). Positions 85–208 (DMKERALIDM…QPGSQRKPPM (124 aa)) constitute a GST C-terminal domain.

This sequence belongs to the GST superfamily. Alpha family. As to quaternary structure, homodimer. In terms of tissue distribution, expressed in the liver, skin and kidney.

It carries out the reaction RX + glutathione = an S-substituted glutathione + a halide anion + H(+). The enzyme catalyses prostaglandin A2 + glutathione = prostaglandin A2-S-(R)-glutathione. It catalyses the reaction prostaglandin J2 + glutathione = prostaglandin J2-S-(R)-glutathione. The catalysed reaction is (13S)-hydroperoxy-(9Z,11E)-octadecadienoate + 2 glutathione = (13S)-hydroxy-(9Z,11E)-octadecadienoate + glutathione disulfide + H2O. It carries out the reaction androst-5-ene-3,17-dione = androst-4-ene-3,17-dione. Its function is as follows. Glutathione S-transferase that catalyzes the nucleophilic attack of the sulfur atom of glutathione on the electrophilic groups of a wide range of exogenous and endogenous compounds. Involved in the formation of glutathione conjugates of both prostaglandin A2 (PGA2) and prostaglandin J2 (PGJ2). It also catalyzes the isomerization of D5-androstene-3,17-dione (AD) into D4-androstene-3,17-dione and may therefore play an important role in hormone biosynthesis. Through its glutathione-dependent peroxidase activity toward the fatty acid hydroperoxide (13S)-hydroperoxy-(9Z,11E)-octadecadienoate/13-HPODE it is also involved in the metabolism of oxidized linoleic acid. This is Glutathione S-transferase A1 (Gsta1) from Mus musculus (Mouse).